We begin with the raw amino-acid sequence, 139 residues long: MLMPKRVKYRKVQRGRMKGDAQRGTTISFGSYGLKALEPAWITNRQIEAARIAMNRYMKRDGKIWIRIFPDKPVTKKAAETRMGSGKGSPEFWVSVVKPGRIMFEADGVPLDVATEAFRLAAKKLPIKTKFIVRPDLEG.

It belongs to the universal ribosomal protein uL16 family. Part of the 50S ribosomal subunit.

Functionally, binds 23S rRNA and is also seen to make contacts with the A and possibly P site tRNAs. The protein is Large ribosomal subunit protein uL16 of Chlorobium phaeobacteroides (strain BS1).